We begin with the raw amino-acid sequence, 906 residues long: DNA mismatch repair protein MutS (906 aa).

Position 656–663 (656–663 (GPNMAGKS)) interacts with ATP.

This sequence belongs to the DNA mismatch repair MutS family.

This protein is involved in the repair of mismatches in DNA. It is possible that it carries out the mismatch recognition step. This protein has a weak ATPase activity. This is DNA mismatch repair protein MutS from Rhodopseudomonas palustris (strain BisA53).